The chain runs to 1166 residues: ATP-dependent helicase/deoxyribonuclease subunit B (1166 aa).

In terms of domain architecture, UvrD-like helicase ATP-binding spans 1–285 (MGAVFLSGRS…VRLEETKRHR (285 aa)). ATP is bound at residue 8-15 (GRSGSGKT). The UvrD-like helicase C-terminal domain occupies 279–586 (EETKRHRHHP…KFALIPPALD (308 aa)). 4 residues coordinate [4Fe-4S] cluster: C801, C1121, C1124, and C1130.

Belongs to the helicase family. AddB/RexB type 1 subfamily. In terms of assembly, heterodimer of AddA and AddB. Mg(2+) is required as a cofactor. [4Fe-4S] cluster serves as cofactor.

Its function is as follows. The heterodimer acts as both an ATP-dependent DNA helicase and an ATP-dependent, dual-direction single-stranded exonuclease. Recognizes the chi site generating a DNA molecule suitable for the initiation of homologous recombination. The AddB subunit has 5' -&gt; 3' nuclease activity but not helicase activity. The polypeptide is ATP-dependent helicase/deoxyribonuclease subunit B (Bacillus licheniformis (strain ATCC 14580 / DSM 13 / JCM 2505 / CCUG 7422 / NBRC 12200 / NCIMB 9375 / NCTC 10341 / NRRL NRS-1264 / Gibson 46)).